Consider the following 148-residue polypeptide: UPF0756 membrane protein YeaL (148 aa).

A run of 4 helical transmembrane segments spans residues 14 to 34 (ALGFISHNTTVAVSILVLIIV), 51 to 71 (LTVGIIILTIGVMAPIASGTL), 86 to 106 (LVAIAVGVFVSWLGGRGITLM), and 121 to 141 (VLGVALFRGVPVGPLIAAGLV).

It belongs to the UPF0756 family.

The protein resides in the cell membrane. In Salmonella choleraesuis (strain SC-B67), this protein is UPF0756 membrane protein YeaL.